A 253-amino-acid chain; its full sequence is Tetraspanin-3 (253 aa).

The Cytoplasmic portion of the chain corresponds to 1-11 (MGQCGITSSKT). A helical membrane pass occupies residues 12-32 (VLVFLNLIFWGAAGILCYVGA). The Extracellular portion of the chain corresponds to 33 to 50 (YVFITYDDYDHFFEDVYT). The helical transmembrane segment at 51-71 (LFPAVVIIAVGALLFIIGLIG) threads the bilayer. The Cytoplasmic segment spans residues 72-85 (CCATIRESRCGLAT). Residues 86-106 (FVFILLLVFVTEVVVVVLGYV) form a helical membrane-spanning segment. Topologically, residues 107-212 (YRAKVENEVD…KKLQEILMHV (106 aa)) are extracellular. Asn127, Asn152, Asn167, and Asn183 each carry an N-linked (GlcNAc...) asparagine glycan. Residues 213–233 (IWAALAFAAIQLLGMLCACIV) traverse the membrane as a helical segment. Residues 234-253 (LCRRSRDPAYELLITGGTYA) are Cytoplasmic-facing.

The protein belongs to the tetraspanin (TM4SF) family. As to quaternary structure, interacts with claudin-11/CLDN11 and integrins.

The protein localises to the membrane. In terms of biological role, regulates the proliferation and migration of oligodendrocytes, a process essential for normal myelination and repair. The protein is Tetraspanin-3 (Tspan3) of Mus musculus (Mouse).